Consider the following 139-residue polypeptide: Small ribosomal subunit protein uS12 (139 aa).

3-methylthioaspartic acid is present on Asp102. Positions 116–139 are disordered; sequence DTTGVAKRSQGRSKYGAKRPKKSK. A compositionally biased stretch (basic residues) spans 124–139; it reads SQGRSKYGAKRPKKSK.

This sequence belongs to the universal ribosomal protein uS12 family. Part of the 30S ribosomal subunit. Contacts proteins S8 and S17. May interact with IF1 in the 30S initiation complex.

Its function is as follows. With S4 and S5 plays an important role in translational accuracy. Functionally, interacts with and stabilizes bases of the 16S rRNA that are involved in tRNA selection in the A site and with the mRNA backbone. Located at the interface of the 30S and 50S subunits, it traverses the body of the 30S subunit contacting proteins on the other side and probably holding the rRNA structure together. The combined cluster of proteins S8, S12 and S17 appears to hold together the shoulder and platform of the 30S subunit. In Mesomycoplasma hyopneumoniae (strain 7448) (Mycoplasma hyopneumoniae), this protein is Small ribosomal subunit protein uS12.